A 736-amino-acid polypeptide reads, in one-letter code: Microtubule-associated protein mu-2 (736 aa).

This sequence belongs to the orthoreovirus mu-2 protein family. As to quaternary structure, interacts with protein mu-NS; in viral inclusions. Interacts with polymerase lambda-3; this interaction stimulates the ATPase activity of mu-2. A divalent metal cation is required as a cofactor.

It localises to the virion. The protein resides in the host cytoplasm. The protein localises to the host cytoskeleton. In terms of biological role, minor inner capsid (core) component. Displays NTPase and RNA 5'-triphosphatase (RTPase) activities. ATP is the preferred substrate for hydrolysis. May function as a cofactor of polymerase lambda-3. Associates with microtubules and plays a role in the formation, structural organization and morphology of viral inclusions, where the assembly of cores and the replication of viral RNA occur. Together with mu-NS, recruits the other core proteins to these inclusions. The polypeptide is Microtubule-associated protein mu-2 (M1) (Mammalia (T3D)).